Here is a 979-residue protein sequence, read N- to C-terminus: SGGFDFSFLPQPPQEKAGVGLGPGPMGLMGPRGPPGASGAPGPQGFGARGPAGPPGKAGEDGRPGERGVVGPQGARGFPGTPGLPGFKGIGLDGLKGQPGAPGVKGEPGAPGENGTGARGLPGERGRVGAPGPAGARGSDGSVGPVGPAGPIGSAGPPGFPGAPGPKGEGPVGNTGPSGPAGPRGEQGLPGVSGPVGPPGNPGANGLTGKGAAGLPGVAGAPGLPGPRGIPGPVGASGATGARGLVGEPGPAGSKGESGGKGEPGSAGPQGPPGSSGEEGKRGPNGEAGSTGPTGPPGLRGGPGSRGLPGADGRAGVIGPAGRGASGPAGVRGPSGDTGRPGEPGLMGARGLPGSPGNVGPAGKEGPVGLPGIDGRPGPIGPAGRGEAGNIGFPGPKGPAGDPGKKGHAGLAGNRGAPGPDGNNGAQGPPGLQGVQGGKGEQGPAGPPGFQGLPGPAGTTGEVGKPGERGIPGEFGLPGPAGPRGERGPPGESGAVGPSGAIGSRGPSGPPGPDGNKGEPGVVGAPGTAGPAGSGGPGERGAAGIPGGKGEKGETGLRGEVGTTGRDGARGAPGAVGAPGPAGEAGAAGPAGPAGPRGSPGERGEVGPAGPNGFAGPAGAAGQPGAKGERGTKGPKGENGIVGPTGPVGSAGPAGPNGPAGPAGSRGDGGPPGVTGFPGAAGRTGPPGPSGITGPPGPPGAAGKEGLRGPRGDQGPVGRTGETGAGGPPGFTGEKGPSGEPGTAGPPGTAGPQGLLGAPGILGLPGSRGERGLPGVAGAVGEPGPLGIGPPGARGPSGGDGLPGHKGERGYAGNAGPVGAAGAPGPHGSVGPAGKHGNRGEPGPVGSVGPVGALGPRGPSGPQGIRGDKGEPGDKGPRGLPGLKGHNGLQGLPGLAGQHGDQGSPGPVGPAGPRGPAGPSGPPGKDGRTGHPGAVGPAGIRGSQGSQGPSGPGPPGPPGPPGASGGGYDFGYEGDFYRA.

Residues 1 to 979 are disordered; it reads SGGFDFSFLP…FGYEGDFYRA (979 aa). 4-hydroxyproline is present on residues Pro10, Pro13, Pro35, and Pro41. Positions 28-41 are enriched in low complexity; that stretch reads LMGPRGPPGASGAP. Lys88 carries the post-translational modification 5-hydroxylysine; alternate. Residue Lys88 is glycosylated (O-linked (Gal...) hydroxylysine; alternate). Residues 128–157 are compositionally biased toward low complexity; it reads VGAPGPAGARGSDGSVGPVGPAGPIGSAGP. The segment covering 256-265 has biased composition (gly residues); it reads GESGGKGEPG. Low complexity predominate over residues 266–276; sequence SAGPQGPPGSS. The span at 298–307 shows a compositional bias: gly residues; that stretch reads GLRGGPGSRG. 4-hydroxyproline is present on residues Pro341 and Pro344. Gly residues predominate over residues 434 to 443; that stretch reads GVQGGKGEQG. Low complexity-rich tracts occupy residues 490 to 507 and 519 to 529; these read PGES…SRGP and EPGVVGAPGTA. Gly residues predominate over residues 530-548; sequence GPAGSGGPGERGAAGIPGG. Composition is skewed to low complexity over residues 570 to 599 and 606 to 626; these read RGAP…PRGS and VGPA…QPGA. A compositionally biased stretch (basic and acidic residues) spans 627–636; the sequence is KGERGTKGPK. The span at 644–654 shows a compositional bias: low complexity; that stretch reads PTGPVGSAGPA. The segment covering 664-673 has biased composition (gly residues); sequence GSRGDGGPPG. Positions 675–684 are enriched in low complexity; it reads TGFPGAAGRT. Positions 721 to 730 are enriched in gly residues; that stretch reads GETGAGGPPG. Low complexity-rich tracts occupy residues 738 to 765 and 773 to 783; these read SGEP…LGLP and LPGVAGAVGEP. A compositionally biased stretch (gly residues) spans 784 to 802; that stretch reads GPLGIGPPGARGPSGGDGL. 2 stretches are compositionally biased toward low complexity: residues 811 to 833 and 841 to 856; these read YAGN…VGPA and EPGP…ALGP. Residues 866–877 are compositionally biased toward basic and acidic residues; sequence RGDKGEPGDKGP. The segment covering 951 to 961 has biased composition (pro residues); the sequence is GPGPPGPPGPP.

It belongs to the fibrillar collagen family. Trimers of one alpha 2(I) and two alpha 1(I) chains. Interacts (via C-terminus) with TMEM131 (via PapD-L domain); the interaction is direct and is involved in assembly and TRAPPIII ER-to-Golgi transport complex-dependent secretion of collagen. In terms of processing, prolines at the third position of the tripeptide repeating unit (G-X-Y) are hydroxylated in some or all of the chains. As to expression, expressed in bones.

It localises to the secreted. The protein resides in the extracellular space. The protein localises to the extracellular matrix. Its function is as follows. Type I collagen is a member of group I collagen (fibrillar forming collagen). The polypeptide is Collagen alpha-2(I) chain (Neocnus dousman (Slow ground sloth)).